Consider the following 478-residue polypeptide: MKITLPDFTRAGVLVVGDVMLDRYWYGPTNRISPEAPVPVVKVDSVEERPGGAANVAMNIASLGAKSRLVGLTGVDDAARALSAALSGVNVQCDFVSVATHPTITKLRVLSRNQQLIRLDFEEGFDGVDPEPMLERIQRSLPGIGALVLSDYAKGALATVETMIALARKAGVPVLVDPKGTDFSRYHGATLLTPNLSEFEAVVGKCKSEADIVERGTALMQQHALSALLVTRSEHGMTLLQPGKAPFHMPTQAQEVFDVTGAGDTVIGVLATALAAGNTLEESCFLANAAAGVVVGKLGTSTVSPMELENAIHARPESGFGVMSEAQLIVEVKKARQRGEKVVMTNGVFDILHAGHVSYLANARKLGDRLIVAVNSDASTRRLKGETRPVNPLLNRMMVLGALEAVDWVIGFEEDTPQRAIAEILPDLLVKGGDYKPEDIAGSKEVWANGGDVQVLNFEDGISTSNIIKTIISGSGKN.

A ribokinase region spans residues 1-318 (MKITLPDFTR…ENAIHARPES (318 aa)). 195-198 (NLSE) serves as a coordination point for ATP. The active site involves Asp-264. Residues 344 to 478 (MTNGVFDILH…KTIISGSGKN (135 aa)) are cytidylyltransferase.

It in the N-terminal section; belongs to the carbohydrate kinase PfkB family. This sequence in the C-terminal section; belongs to the cytidylyltransferase family. As to quaternary structure, homodimer.

It carries out the reaction D-glycero-beta-D-manno-heptose 7-phosphate + ATP = D-glycero-beta-D-manno-heptose 1,7-bisphosphate + ADP + H(+). The catalysed reaction is D-glycero-beta-D-manno-heptose 1-phosphate + ATP + H(+) = ADP-D-glycero-beta-D-manno-heptose + diphosphate. It participates in nucleotide-sugar biosynthesis; ADP-L-glycero-beta-D-manno-heptose biosynthesis; ADP-L-glycero-beta-D-manno-heptose from D-glycero-beta-D-manno-heptose 7-phosphate: step 1/4. Its pathway is nucleotide-sugar biosynthesis; ADP-L-glycero-beta-D-manno-heptose biosynthesis; ADP-L-glycero-beta-D-manno-heptose from D-glycero-beta-D-manno-heptose 7-phosphate: step 3/4. Functionally, catalyzes the phosphorylation of D-glycero-D-manno-heptose 7-phosphate at the C-1 position to selectively form D-glycero-beta-D-manno-heptose-1,7-bisphosphate. In terms of biological role, catalyzes the ADP transfer from ATP to D-glycero-beta-D-manno-heptose 1-phosphate, yielding ADP-D-glycero-beta-D-manno-heptose. This chain is Bifunctional protein HldE, found in Erwinia tasmaniensis (strain DSM 17950 / CFBP 7177 / CIP 109463 / NCPPB 4357 / Et1/99).